The following is a 253-amino-acid chain: Triosephosphate isomerase (253 aa).

Asparagine 8–lysine 10 contacts substrate. The active-site Electrophile is the histidine 91. Glutamate 168 serves as the catalytic Proton acceptor. Residues glycine 174, serine 213, and glycine 234–glycine 235 contribute to the substrate site.

This sequence belongs to the triosephosphate isomerase family. Homodimer.

It is found in the cytoplasm. It carries out the reaction D-glyceraldehyde 3-phosphate = dihydroxyacetone phosphate. The protein operates within carbohydrate biosynthesis; gluconeogenesis. It functions in the pathway carbohydrate degradation; glycolysis; D-glyceraldehyde 3-phosphate from glycerone phosphate: step 1/1. Its function is as follows. Involved in the gluconeogenesis. Catalyzes stereospecifically the conversion of dihydroxyacetone phosphate (DHAP) to D-glyceraldehyde-3-phosphate (G3P). The chain is Triosephosphate isomerase from Acidiphilium cryptum (strain JF-5).